The chain runs to 434 residues: MRVLVLGSGVIGTASAYYLARQGFEVTVVDRQPAVAMETSFANAGQISPGYASPWAAPGVPLKAIKWLLERHAPLAIKLTGDVDQYLWMAQMLRNCTASRYAVNKERMVRLSEYSRDCLDELRAETGIAYESRSLGTTQLFRTQAQLDAAAKDIAVLEQSGVPYELLDRDGIARVEPALDSVKGILAGALRLPNDQTGDCQLFTTKLADMAIKLGVEFRFGQDIQRLDFAGDRINGVWIDGKLETADRYVLALGSYSPQMLKPLGIKAPVYPLKGYSLTVPITNGDMAPTSTILDETYKVAITRFDNRIRVGGMAEIAGFDLSLNPRRRETLEMIVNDLYPRGGDLSQASFWTGLRPATPDGTPIVGATAFRNLFLNTGHGTLGWTMACGSGRLLADLIARKKPQISAEGLDISRYGNSREVAKHGQSAPVHQQ.

Residue 3–17 (VLVLGSGVIGTASAY) participates in FAD binding.

It belongs to the DadA oxidoreductase family. Requires FAD as cofactor.

The enzyme catalyses a D-alpha-amino acid + A + H2O = a 2-oxocarboxylate + AH2 + NH4(+). It functions in the pathway amino-acid degradation; D-alanine degradation; NH(3) and pyruvate from D-alanine: step 1/1. Its function is as follows. Oxidative deamination of D-amino acids. This is D-amino acid dehydrogenase from Pseudomonas entomophila (strain L48).